We begin with the raw amino-acid sequence, 729 residues long: Fatty acid oxidation complex subunit alpha (729 aa).

Positions 1–189 (MLYQSETLQL…KIGLVDAVVD (189 aa)) are enoyl-CoA hydratase/isomerase. Asp-296 provides a ligand contact to substrate. Residues 311-729 (AAPKLAAVLG…LLDVSTNQPA (419 aa)) form a 3-hydroxyacyl-CoA dehydrogenase region. NAD(+) contacts are provided by residues Met-324, Asp-343, 400 to 402 (VVE), Lys-407, and Ser-429. His-450 (for 3-hydroxyacyl-CoA dehydrogenase activity) is an active-site residue. Asn-453 lines the NAD(+) pocket. 2 residues coordinate substrate: Asn-500 and Tyr-660.

It in the N-terminal section; belongs to the enoyl-CoA hydratase/isomerase family. In the C-terminal section; belongs to the 3-hydroxyacyl-CoA dehydrogenase family. In terms of assembly, heterotetramer of two alpha chains (FadB) and two beta chains (FadA).

The enzyme catalyses a (3S)-3-hydroxyacyl-CoA + NAD(+) = a 3-oxoacyl-CoA + NADH + H(+). It catalyses the reaction a (3S)-3-hydroxyacyl-CoA = a (2E)-enoyl-CoA + H2O. It carries out the reaction a 4-saturated-(3S)-3-hydroxyacyl-CoA = a (3E)-enoyl-CoA + H2O. The catalysed reaction is (3S)-3-hydroxybutanoyl-CoA = (3R)-3-hydroxybutanoyl-CoA. The enzyme catalyses a (3Z)-enoyl-CoA = a 4-saturated (2E)-enoyl-CoA. It catalyses the reaction a (3E)-enoyl-CoA = a 4-saturated (2E)-enoyl-CoA. It participates in lipid metabolism; fatty acid beta-oxidation. Involved in the aerobic and anaerobic degradation of long-chain fatty acids via beta-oxidation cycle. Catalyzes the formation of 3-oxoacyl-CoA from enoyl-CoA via L-3-hydroxyacyl-CoA. It can also use D-3-hydroxyacyl-CoA and cis-3-enoyl-CoA as substrate. The chain is Fatty acid oxidation complex subunit alpha from Yersinia pestis bv. Antiqua (strain Antiqua).